The primary structure comprises 428 residues: Mitochondrial import inner membrane translocase subunit TIM50-C (428 aa).

A helical transmembrane segment spans residues 59-79 (LFTCTALPAAAPALFSILHTA). Residues 80–428 (RGYSSTTKQE…KQWSRNILGR (349 aa)) are Mitochondrial intermembrane-facing. Positions 112-138 (FPQTSPEVDSNAEQERKKREEEEEKEN) are disordered. Residues 124–138 (EQERKKREEEEEKEN) are compositionally biased toward basic and acidic residues. The 144-residue stretch at 224–367 (YVQPRYTLVL…LDLIAFLKII (144 aa)) folds into the FCP1 homology domain.

The protein belongs to the TIM50 family. As to quaternary structure, component of the TIM23 complex at least composed of Tim23, Tim17 (Tim17a1, Tim17a2 or Tim17b1) and a Tim50.

The protein resides in the mitochondrion inner membrane. In terms of biological role, essential component of the TIM23 complex, a complex that mediates the translocation of transit peptide-containing proteins across the mitochondrial inner membrane. The sequence is that of Mitochondrial import inner membrane translocase subunit TIM50-C (ttm50) from Drosophila melanogaster (Fruit fly).